We begin with the raw amino-acid sequence, 430 residues long: RNA pseudouridine synthase 2, chloroplastic (430 aa).

A chloroplast-targeting transit peptide spans 1–43 (MLSISQLPSFSLTTAKSLRYPSSPSSSLSIFFSFFPKVSNFVR). In terms of domain architecture, S4 RNA-binding spans 82 to 155 (IRLDSWISSR…IPLDIVYEDK (74 aa)). The tract at residues 195–222 (SNSEEDDDSDEETFSDDEEMTTSPSSYA) is disordered. The span at 196-214 (NSEEDDDSDEETFSDDEEM) shows a compositional bias: acidic residues. Aspartate 234 is an active-site residue.

The protein belongs to the pseudouridine synthase RluA family.

It is found in the plastid. It localises to the chloroplast. The enzyme catalyses a uridine in RNA = a pseudouridine in RNA. The protein is RNA pseudouridine synthase 2, chloroplastic of Arabidopsis thaliana (Mouse-ear cress).